We begin with the raw amino-acid sequence, 236 residues long: Orotidine 5'-phosphate decarboxylase (236 aa).

Residues Asp-14, Lys-36, 63-72, Thr-123, Arg-184, Gln-193, Gly-213, and Arg-214 each bind substrate; that span reads DLKFHDIPNT. The active-site Proton donor is the Lys-65.

The protein belongs to the OMP decarboxylase family. Type 1 subfamily. As to quaternary structure, homodimer.

The catalysed reaction is orotidine 5'-phosphate + H(+) = UMP + CO2. It functions in the pathway pyrimidine metabolism; UMP biosynthesis via de novo pathway; UMP from orotate: step 2/2. Catalyzes the decarboxylation of orotidine 5'-monophosphate (OMP) to uridine 5'-monophosphate (UMP). In Marinobacter nauticus (strain ATCC 700491 / DSM 11845 / VT8) (Marinobacter aquaeolei), this protein is Orotidine 5'-phosphate decarboxylase.